The primary structure comprises 120 residues: Crustacean hyperglycemic hormones 2 (120 aa).

Positions 1 to 27 (MIAFHMVWSALLASLLLLLLAPSASPV) are cleaved as a signal peptide. 3 disulfides stabilise this stretch: C53–C89, C69–C85, and C72–C98. V118 carries the valine amide modification.

This sequence belongs to the arthropod CHH/MIH/GIH/VIH hormone family.

The protein localises to the secreted. In terms of biological role, hormone found in the sinus gland of isopods and decapods which controls the blood sugar level. Has a secretagogue action over the amylase released from the midgut gland. May act as a stress hormone and may be involved in the control of molting and reproduction. This is Crustacean hyperglycemic hormones 2 from Penaeus japonicus (Kuruma prawn).